Reading from the N-terminus, the 198-residue chain is Protoplast secreted protein 2 (198 aa).

An N-terminal signal peptide occupies residues 1–21; sequence MPRVAIIIYTLYGHVAATAEA. The Flavodoxin-like domain occupies 22–191; the sequence is EKKGIEAAGG…QVHEIQGKTF (170 aa).

This sequence belongs to the WrbA family.

It localises to the secreted. The protein is Protoplast secreted protein 2 (PST2) of Saccharomyces cerevisiae (strain ATCC 204508 / S288c) (Baker's yeast).